The sequence spans 470 residues: UDP-N-acetylmuramoylalanine--D-glutamate ligase (470 aa).

An ATP-binding site is contributed by 121–127 (GTNGKST).

Belongs to the MurCDEF family.

The protein localises to the cytoplasm. It carries out the reaction UDP-N-acetyl-alpha-D-muramoyl-L-alanine + D-glutamate + ATP = UDP-N-acetyl-alpha-D-muramoyl-L-alanyl-D-glutamate + ADP + phosphate + H(+). The protein operates within cell wall biogenesis; peptidoglycan biosynthesis. Functionally, cell wall formation. Catalyzes the addition of glutamate to the nucleotide precursor UDP-N-acetylmuramoyl-L-alanine (UMA). The protein is UDP-N-acetylmuramoylalanine--D-glutamate ligase of Rhizobium etli (strain ATCC 51251 / DSM 11541 / JCM 21823 / NBRC 15573 / CFN 42).